Consider the following 559-residue polypeptide: Leucine-rich repeat-containing protein 71 (559 aa).

Positions 1 to 18 are enriched in low complexity; sequence MSSEQSAPGASPRAPRPG. Residues 1-56 are disordered; that stretch reads MSSEQSAPGASPRAPRPGTQKSSGAVTKKGERAAKEKPATVLPPVGEEEPKSPEEY. Basic and acidic residues predominate over residues 28 to 38; the sequence is KKGERAAKEKP. LRR repeat units follow at residues 172–193, 196–216, 221–241, 253–266, and 281–302; these read NLWK…LPLC, TLRK…HKLM, TIAH…QLLG, TLVS…HIGD, and SLLW…KLAE. Basic and acidic residues-rich tracts occupy residues 324–348 and 380–391; these read KGTQ…REKS and KSWELAKKEEKL. Residues 324 to 427 form a disordered region; that stretch reads KGTQERSRSP…PEQKPSRAKG (104 aa).

This chain is Leucine-rich repeat-containing protein 71 (LRRC71), found in Homo sapiens (Human).